Reading from the N-terminus, the 671-residue chain is DNA ligase (671 aa).

NAD(+)-binding positions include 32–36 (DAEYD), 81–82 (SL), and glutamate 113. Lysine 115 acts as the N6-AMP-lysine intermediate in catalysis. Residues arginine 136, glutamate 173, lysine 290, and lysine 314 each contribute to the NAD(+) site. Residues cysteine 408, cysteine 411, cysteine 426, and cysteine 432 each coordinate Zn(2+). A BRCT domain is found at 593–671 (EIDSPFAGKT…EAEMLRLLGS (79 aa)).

The protein belongs to the NAD-dependent DNA ligase family. LigA subfamily. Mg(2+) is required as a cofactor. It depends on Mn(2+) as a cofactor.

It carries out the reaction NAD(+) + (deoxyribonucleotide)n-3'-hydroxyl + 5'-phospho-(deoxyribonucleotide)m = (deoxyribonucleotide)n+m + AMP + beta-nicotinamide D-nucleotide.. DNA ligase that catalyzes the formation of phosphodiester linkages between 5'-phosphoryl and 3'-hydroxyl groups in double-stranded DNA using NAD as a coenzyme and as the energy source for the reaction. It is essential for DNA replication and repair of damaged DNA. This is DNA ligase from Escherichia coli (strain ATCC 8739 / DSM 1576 / NBRC 3972 / NCIMB 8545 / WDCM 00012 / Crooks).